A 132-amino-acid chain; its full sequence is Vacuolar protein sorting-associated protein 55 homolog (132 aa).

4 consecutive transmembrane segments (helical) span residues 7 to 27, 32 to 52, 68 to 88, and 98 to 118; these read VAAL…GCAL, TWTP…LLIA, LALF…IVLA, and CFLV…YFYL.

The protein belongs to the OB-RGRP/VPS55 family.

Its subcellular location is the endosome membrane. Its function is as follows. Involved in endosomal protein transport. The chain is Vacuolar protein sorting-associated protein 55 homolog from Caenorhabditis elegans.